We begin with the raw amino-acid sequence, 295 residues long: Nucleotide-binding protein MCA0739 (295 aa).

Residue 8–15 participates in ATP binding; that stretch reads GFSGSGKS. Position 60 to 63 (60 to 63) interacts with GTP; it reads DARN.

This sequence belongs to the RapZ-like family.

Displays ATPase and GTPase activities. This is Nucleotide-binding protein MCA0739 from Methylococcus capsulatus (strain ATCC 33009 / NCIMB 11132 / Bath).